The sequence spans 775 residues: MATPDSLALFTGLGLSENKARETLKNAALSTQLREAATQAQQTLGSTIDKATGTLLYGLASRLRDTRRLSFLVGYIANKKIHTELQLSAALEYVRSHPLDPIDTKDFEQECGVGVVVTPEQIEEAVEATINRHRPQLLVERYRFSMGLLMGEARAALRWADGKMIKNEVDMQVLHLLGPKMEADLEKKPKVAKARLEETDRKTAKDVVENGEVAGQTLSLMEQLRGEALKFHKPGENYKTPGYVTTPHTMDLLKQHLEITGGQVRTRFPPEPNGILHIGHAKAINFNFGYAKANNGICFLRFDDTNPEKEEAKFFTAIYDMVTWLGYTPYKVTYASDYFDQLYAWAVELIRRGQAYVCHQRGEELKGHNPLPSPWRDRPIEESLLLFEAMRKGKFAEGEATLRMKLVMEDGKMDPVAYRVKYTPHHRTGDKWCIYPTYDYTHCLCDSIEHITHSLCTKEFQARRSSYFWLCNALDVYCPVQWEYGRLNLHYAVVSKRKILQLVAAGAVRDWDDPRLFTLTALRRRGFPPEAINNFCARVGVTVAQTTMEPHLLEACVRDVLNDTAPRAMAVLEPLQVVITNFPAPKPLDIRVPNFPADETKGFHQVPFASTVFIERTDFKEESEPGYKRLAWGQPVGLRHTGYVIELQHVVRGSSGCVECLEVTCRRADAGEKPKAFIHWVSQPLVCEIRLYERLFQHKNPEDPVEVPGGFLSDLNPASLQVIKGALVDCSVALAKPFDKFQFERLGYFSVDPDSHQGQVVFNRTVTLKEDPGKV.

Ala2 carries the post-translational modification N-acetylalanine. Ser70 is subject to Phosphoserine. Residues 271 to 273 (EPN) and 277 to 283 (HIGHAKA) contribute to the ATP site. Asp303 provides a ligand contact to L-glutamine. Lys309 bears the N6-acetyllysine mark. Residue Tyr438 coordinates L-glutamine. ATP contacts are provided by residues Thr457, 486–487 (RL), and 494–496 (VSK). Ser495 carries the phosphoserine modification.

This sequence belongs to the class-I aminoacyl-tRNA synthetase family. Monomer. Part of a multisubunit complex that groups tRNA ligases for Arg (RARS1), Asp (DARS1), Gln (QARS1), Ile (IARS1), Leu (LARS1), Lys (KARS1), Met (MARS1) the bifunctional ligase for Glu and Pro (EPRS1) and the auxiliary subunits AIMP1/p43, AIMP2/p38 and EEF1E1/p18. Interacts with RARS1. Part of a complex composed of RARS1, QARS1 and AIMP1. In terms of tissue distribution, detected in dorsal root ganglia (at protein level). Detected in dorsal root ganglia.

It is found in the cytoplasm. The protein resides in the cytosol. The catalysed reaction is tRNA(Gln) + L-glutamine + ATP = L-glutaminyl-tRNA(Gln) + AMP + diphosphate. Functionally, glutamine--tRNA ligase. Plays a critical role in brain development. The chain is Glutamine--tRNA ligase (Qars1) from Rattus norvegicus (Rat).